Here is a 209-residue protein sequence, read N- to C-terminus: Large ribosomal subunit protein uL3 (209 aa).

Residues 112–122 (GTTRGHGTQGN) are compositionally biased toward polar residues. The interval 112-146 (GTTRGHGTQGNIKRWGQSRGPETHGSRYHRIPGSM) is disordered.

Belongs to the universal ribosomal protein uL3 family. In terms of assembly, part of the 50S ribosomal subunit. Forms a cluster with proteins L14 and L19.

Its function is as follows. One of the primary rRNA binding proteins, it binds directly near the 3'-end of the 23S rRNA, where it nucleates assembly of the 50S subunit. The polypeptide is Large ribosomal subunit protein uL3 (Lactobacillus gasseri (strain ATCC 33323 / DSM 20243 / BCRC 14619 / CIP 102991 / JCM 1131 / KCTC 3163 / NCIMB 11718 / NCTC 13722 / AM63)).